The sequence spans 588 residues: Adenine deaminase (588 aa).

It belongs to the metallo-dependent hydrolases superfamily. Adenine deaminase family. As to quaternary structure, homodimer. It depends on Mn(2+) as a cofactor.

It catalyses the reaction adenine + H2O + H(+) = hypoxanthine + NH4(+). The protein is Adenine deaminase of Escherichia coli (strain SE11).